Consider the following 264-residue polypeptide: Na(+)-translocating NADH-quinone reductase subunit E (264 aa).

6 helical membrane-spanning segments follow: residues 11-31, 50-70, 90-110, 123-143, 149-169, and 189-209; these read VFGIFLQATFIQNILLSNFLG, MSVALVLTVTGSINWVVHTFI, FLELIIFIVVIAAFTQILELL, GIFLPLIAVNCAILGGVLFGI, FIPMMIFSLGAGCGWWLAIVL, and MGISFITTGLIAMAFMSLTGI.

It belongs to the NqrDE/RnfAE family. As to quaternary structure, composed of six subunits; NqrA, NqrB, NqrC, NqrD, NqrE and NqrF.

The protein resides in the cell inner membrane. The enzyme catalyses a ubiquinone + n Na(+)(in) + NADH + H(+) = a ubiquinol + n Na(+)(out) + NAD(+). Its function is as follows. NQR complex catalyzes the reduction of ubiquinone-1 to ubiquinol by two successive reactions, coupled with the transport of Na(+) ions from the cytoplasm to the periplasm. NqrA to NqrE are probably involved in the second step, the conversion of ubisemiquinone to ubiquinol. This chain is Na(+)-translocating NADH-quinone reductase subunit E, found in Chlamydia caviae (strain ATCC VR-813 / DSM 19441 / 03DC25 / GPIC) (Chlamydophila caviae).